Reading from the N-terminus, the 70-residue chain is Delta-hexatoxin-Mg1b (70 aa).

The signal sequence occupies residues 1-26 (MKILEKALLENDSAAEEESRNLRTKR). 4 disulfide bridges follow: cysteine 27–cysteine 41, cysteine 34–cysteine 46, cysteine 40–cysteine 57, and cysteine 42–cysteine 68.

Expressed by the venom gland.

It localises to the secreted. Functionally, inhibits tetrodotoxin-sensitive sodium channels (Nav). Intracranial injection into mice causes strong convulsions and death. Intrathorax injection into crickets causes paralysis prolonged for 2 minutes, followed by recovery. The polypeptide is Delta-hexatoxin-Mg1b (Macrothele gigas (Japanese funnel web spider)).